The chain runs to 257 residues: Zinc transporter ZupT (257 aa).

A run of 8 helical transmembrane segments spans residues 5-25 (LILT…GVIG), 32-52 (VLAF…LMEM), 61-81 (GMSP…YFAL), 109-129 (AILL…ATYV), 137-157 (LGFG…LAVA), 171-191 (ILWA…TWLI), 195-215 (MISP…MVAL), and 236-256 (GVLC…TAGF). Residues N120 and E123 each contribute to the Fe(2+) site. 2 residues coordinate Zn(2+): E123 and H148. Positions 149, 152, and 181 each coordinate Fe(2+). E152 is a Zn(2+) binding site.

The protein belongs to the ZIP transporter (TC 2.A.5) family. ZupT subfamily.

The protein localises to the cell inner membrane. It catalyses the reaction Zn(2+)(in) = Zn(2+)(out). Functionally, mediates zinc uptake. May also transport other divalent cations. This is Zinc transporter ZupT from Enterobacter sp. (strain 638).